The chain runs to 252 residues: Glucosamine-6-phosphate deaminase (252 aa).

Catalysis depends on Asp67, which acts as the Proton acceptor; for enolization step. The active-site For ring-opening step is the Asn137. Catalysis depends on His139, which acts as the Proton acceptor; for ring-opening step. Residue Glu144 is the For ring-opening step of the active site.

It belongs to the glucosamine/galactosamine-6-phosphate isomerase family. NagB subfamily.

The catalysed reaction is alpha-D-glucosamine 6-phosphate + H2O = beta-D-fructose 6-phosphate + NH4(+). It functions in the pathway amino-sugar metabolism; N-acetylneuraminate degradation; D-fructose 6-phosphate from N-acetylneuraminate: step 5/5. Catalyzes the reversible isomerization-deamination of glucosamine 6-phosphate (GlcN6P) to form fructose 6-phosphate (Fru6P) and ammonium ion. The polypeptide is Glucosamine-6-phosphate deaminase (Staphylococcus aureus (strain Mu3 / ATCC 700698)).